A 140-amino-acid polypeptide reads, in one-letter code: Large ribosomal subunit protein uL14x/uL14z/uL14y (140 aa).

It belongs to the universal ribosomal protein uL14 family.

This Arabidopsis thaliana (Mouse-ear cress) protein is Large ribosomal subunit protein uL14x/uL14z/uL14y (RPL23A).